Consider the following 241-residue polypeptide: Acetoacetyl-CoA reductase (241 aa).

NADP(+) is bound by residues 12 to 14 (RGI), arginine 39, and 82 to 86 (NAGIT). Substrate-binding positions include aspartate 88 and 141–144 (QMGQ). Catalysis depends on tyrosine 147, which acts as the Proton acceptor. 177-180 (PGYI) is a binding site for NADP(+). Substrate is bound at residue 178–179 (GY).

Belongs to the short-chain dehydrogenases/reductases (SDR) family.

It localises to the cytoplasm. The enzyme catalyses a (3R)-3-hydroxyacyl-CoA + NADP(+) = a 3-oxoacyl-CoA + NADPH + H(+). Its pathway is biopolymer metabolism; poly-(R)-3-hydroxybutanoate biosynthesis. This Rhizobium meliloti (strain 1021) (Ensifer meliloti) protein is Acetoacetyl-CoA reductase.